The primary structure comprises 358 residues: Capsid protein VP1/VP2 (358 aa).

The span at 1–15 (MADSTSMDHDGEQRG) shows a compositional bias: basic and acidic residues. The tract at residues 1 to 37 (MADSTSMDHDGEQRGTKRKRDAGAGGSGAGIGKGTSN) is disordered. Gly residues predominate over residues 23–33 (GAGGSGAGIGK).

It is found in the virion. In terms of biological role, capsid protein self-assembles to form an icosahedral capsid with a T=1 symmetry, about 22 nm in diameter, and consisting of 60 copies of size variants of the capsid proteins, which differ in the N-terminushe capsid encapsulates the genomic ssDNA. Capsid proteins are responsible for the attachment to host cell receptors. This attachment induces virion internalization predominantly through clathrin-dependent endocytosis. This Aedes (Aedes densovirus) protein is Capsid protein VP1/VP2 (VP).